A 365-amino-acid polypeptide reads, in one-letter code: Baculoviral IAP repeat-containing protein 7 (365 aa).

BIR repeat units lie at residues 7 to 73 and 115 to 180; these read RQRS…PFLQ and RLGS…DFLL. Zn(2+)-binding residues include Cys-149, Cys-152, His-169, and Cys-176. Residues 186 to 234 form a self-inhibits the anti-apoptotic function region; sequence AFIRSVQESFFSSPETSPESVGSYEGSPVSSPGSPPVCPFLSTSVAQGA. Residue Ser-198 is modified to Phosphoserine. Ser-202 is modified (phosphoserine; by MAPK1). A Phosphoserine modification is found at Ser-212. A phosphoserine; by MAPK1 mark is found at Ser-216 and Ser-219. Residues 278–306 are disordered; sequence TESVSVPRAPTQRERPEPPKEPAPPLSTE. A compositionally biased stretch (basic and acidic residues) spans 288–297; the sequence is TQRERPEPPK. The RING-type zinc-finger motif lies at 318 to 353; it reads CKVCMDNDVSMVFVPCGHLVVCTECAPNLRHCPICR.

The protein belongs to the IAP family. Auto-ubiquitinated, and degraded in a 2-step mechanism; a caspase-independent first step and a caspase-dependent second step. Post-translationally, phosphorylated via MAPK-dependent and CDK-dependent pathways during oocyte maturation. Phosphorylation does not appear to affect caspase inhibition or autoubiquitination activity.

Its subcellular location is the cytoplasm. The catalysed reaction is S-ubiquitinyl-[E2 ubiquitin-conjugating enzyme]-L-cysteine + [acceptor protein]-L-lysine = [E2 ubiquitin-conjugating enzyme]-L-cysteine + N(6)-ubiquitinyl-[acceptor protein]-L-lysine.. Weak apoptotic suppressor. Has E3 ubiquitin-protein ligase activity. Weak inhibitor of caspase activity. The chain is Baculoviral IAP repeat-containing protein 7 (birc7) from Xenopus tropicalis (Western clawed frog).